Reading from the N-terminus, the 326-residue chain is Probable UDP-3-O-acyl-N-acetylglucosamine deacetylase 2, mitochondrial (326 aa).

A mitochondrion-targeting transit peptide spans 1-21 (MRLPVTVKATKPSFLVIWIRY). Residues histidine 109, histidine 281, and aspartate 285 each contribute to the Zn(2+) site.

Belongs to the LpxC family. It depends on Zn(2+) as a cofactor.

It localises to the mitochondrion. The catalysed reaction is a UDP-3-O-[(3R)-3-hydroxyacyl]-N-acetyl-alpha-D-glucosamine + H2O = a UDP-3-O-[(3R)-3-hydroxyacyl]-alpha-D-glucosamine + acetate. Its pathway is glycolipid biosynthesis; lipid IV(A) biosynthesis; lipid IV(A) from (3R)-3-hydroxytetradecanoyl-[acyl-carrier-protein] and UDP-N-acetyl-alpha-D-glucosamine: step 2/6. Its function is as follows. Involved in the biosynthesis of lipid A, a phosphorylated glycolipid that in bacteria anchors the lipopolysaccharide to the outer membrane of the cell. Lipid A-like molecules in plants may serve as structural components of the outer membranes of mitochondria and/or chloroplasts, or may be involved in signal transduction or plant defense responses (Potential). The sequence is that of Probable UDP-3-O-acyl-N-acetylglucosamine deacetylase 2, mitochondrial (LPXC2) from Arabidopsis thaliana (Mouse-ear cress).